The sequence spans 747 residues: Histone-lysine N-methyltransferase EZH1 (747 aa).

Positions 188 to 231 (DEEEDGHNDPSDGKQDDSKEDLPVTRKRKRHAIEGNKKSSKKQF) are disordered. The segment covering 194–211 (HNDPSDGKQDDSKEDLPV) has biased composition (basic and acidic residues). K327 participates in a covalent cross-link: Glycyl lysine isopeptide (Lys-Gly) (interchain with G-Cter in SUMO2). The disordered stretch occupies residues 368–414 (VSASCSNASASAMAETKEGDSDRDTGNDWASSSSEANSRCQTPTKQK). Positions 369-381 (SASCSNASASAMA) are enriched in low complexity. The segment covering 382-393 (ETKEGDSDRDTG) has biased composition (basic and acidic residues). Residues 395 to 414 (DWASSSSEANSRCQTPTKQK) are compositionally biased toward polar residues. The Nuclear localization signal signature appears at 491–496 (QKKKRK). Residues 504-606 (CRKIQLKKDN…CKVVSCKNCS (103 aa)) enclose the CXC domain. The SET domain occupies 613 to 728 (KHLLLAPSDV…AGEELFFDYR (116 aa)).

It belongs to the class V-like SAM-binding methyltransferase superfamily. Histone-lysine methyltransferase family. EZ subfamily. As to quaternary structure, component of the PRC2/EED-EZH1 complex, which includes EED, EZH1, SUZ12, RBBP4 and AEBP2. The PRC2/EED-EZH1 is less abundant than the PRC2/EED-EZH2 complex, has weak methyltransferase activity and compacts chromatin in the absence of the methyltransferase cofactor S-adenosyl-L-methionine (SAM). Interacts with EZHIP; the interaction blocks EZH1 methyltransferase activity. As to expression, expressed at high levels in kidney, adrenal gland, testis and brain.

Its subcellular location is the nucleus. The enzyme catalyses L-lysyl(27)-[histone H3] + 3 S-adenosyl-L-methionine = N(6),N(6),N(6)-trimethyl-L-lysyl(27)-[histone H3] + 3 S-adenosyl-L-homocysteine + 3 H(+). Its function is as follows. Polycomb group (PcG) protein. Catalytic subunit of the PRC2/EED-EZH1 complex, which methylates 'Lys-27' of histone H3, leading to transcriptional repression of the affected target gene. Able to mono-, di- and trimethylate 'Lys-27' of histone H3 to form H3K27me1, H3K27me2 and H3K27me3, respectively. Required for embryonic stem cell derivation and self-renewal, suggesting that it is involved in safeguarding embryonic stem cell identity. Compared to EZH2-containing complexes, it is less abundant in embryonic stem cells, has weak methyltransferase activity and plays a less critical role in forming H3K27me3, which is required for embryonic stem cell identity and proper differentiation. In Mus musculus (Mouse), this protein is Histone-lysine N-methyltransferase EZH1 (Ezh1).